Reading from the N-terminus, the 260-residue chain is MESINWNTRSVREELAAVKRAAPFVYGLTNYVAANLSANVLLAVGAAPAIGAAADWPARFGAGAGALWINTAALMSSGADTLRTAARAASETGTRWVLDPVATGAGAPEYDAIVQELLAFRPSVIRGNASELIALAGGTAAGKGVDTTASSDSALAYIGDLARRSGAVVAVSGPIDYVTDGIDTLAIAGGDARLTRVTGAGCALGALIAALLAQRGAALAAAAAAHAIYAIAAERAADARGTGSFAVRFVDELSLLDPGE.

The ATP site is built by Arg-126 and Ser-172. Gly-199 is a substrate binding site.

This sequence belongs to the Thz kinase family. The cofactor is Mg(2+).

It catalyses the reaction 5-(2-hydroxyethyl)-4-methylthiazole + ATP = 4-methyl-5-(2-phosphooxyethyl)-thiazole + ADP + H(+). Its pathway is cofactor biosynthesis; thiamine diphosphate biosynthesis; 4-methyl-5-(2-phosphoethyl)-thiazole from 5-(2-hydroxyethyl)-4-methylthiazole: step 1/1. Its function is as follows. Catalyzes the phosphorylation of the hydroxyl group of 4-methyl-5-beta-hydroxyethylthiazole (THZ). The polypeptide is Hydroxyethylthiazole kinase (Burkholderia thailandensis (strain ATCC 700388 / DSM 13276 / CCUG 48851 / CIP 106301 / E264)).